A 550-amino-acid chain; its full sequence is Chaperonin GroEL (550 aa).

Residues Thr30–Pro33, Lys51, Asp87–Thr91, Gly415, Asn479–Ala481, and Asp495 each bind ATP.

Belongs to the chaperonin (HSP60) family. As to quaternary structure, forms a cylinder of 14 subunits composed of two heptameric rings stacked back-to-back. Interacts with the co-chaperonin GroES.

The protein resides in the cytoplasm. The catalysed reaction is ATP + H2O + a folded polypeptide = ADP + phosphate + an unfolded polypeptide.. In terms of biological role, together with its co-chaperonin GroES, plays an essential role in assisting protein folding. The GroEL-GroES system forms a nano-cage that allows encapsulation of the non-native substrate proteins and provides a physical environment optimized to promote and accelerate protein folding. The polypeptide is Chaperonin GroEL (Polaromonas sp. (strain JS666 / ATCC BAA-500)).